A 526-amino-acid polypeptide reads, in one-letter code: Reelin domain-containing protein 1 (526 aa).

Residues 1–23 (MRMQAALVGWACTTLCLASCSSA) form the signal peptide. A Reelin domain is found at 24–179 (FSHGASTVAC…SAHSDDRMEP (156 aa)). Over 24-443 (FSHGASTVAC…PLGIQLRTPQ (420 aa)) the chain is Extracellular. 3 disordered regions span residues 242–272 (DAET…PTLE), 294–336 (FASS…TVTQ), and 370–398 (LQTS…LPQS). Positions 245–271 (TLSQPSSHTATEGSINQQPSGDSNPTL) are enriched in polar residues. The span at 385–396 (SEASRASASFLP) shows a compositional bias: polar residues. Residues 444-462 (LGILLCLSATLGMALAAGL) traverse the membrane as a helical segment. Over 463–526 (RYLHTQYCHQ…PSVGSKKTVL (64 aa)) the chain is Cytoplasmic.

The protein resides in the membrane. In Homo sapiens (Human), this protein is Reelin domain-containing protein 1.